The sequence spans 170 residues: uncharacterized protein (170 aa).

Residues 1–15 lie on the Cytoplasmic side of the membrane; the sequence is MFLTSPFESCIVLSS. Residues 16-36 traverse the membrane as a helical segment; that stretch reads LIAGLLFSLSTGFVGILGVFA. Over 37-76 the chain is Extracellular; it reads SLFETELSVSPKRLSLSSLSWPKTFWALLSSVEGVSWESS. The helical transmembrane segment at 77–97 threads the bilayer; sequence LFACIVGCCFAVTVIASLSAS. The Cytoplasmic segment spans residues 98–119; that stretch reads RVFGTVASSFRDSSCCCDSSPA. Residues 120 to 140 form a helical membrane-spanning segment; sequence VSVLATPATAALALLSLLLSL. Residues 141–170 lie on the Extracellular side of the membrane; that stretch reads PCWSTSTEAFTVDPSPSVFSMLANRITIGL.

It is found in the membrane. This is an uncharacterized protein from Saccharomyces cerevisiae (strain ATCC 204508 / S288c) (Baker's yeast).